Reading from the N-terminus, the 303-residue chain is Ribosomal protein L11 methyltransferase (303 aa).

Residues Thr144, Gly165, Asp187, and Asn235 each coordinate S-adenosyl-L-methionine.

Belongs to the methyltransferase superfamily. PrmA family.

The protein localises to the cytoplasm. The enzyme catalyses L-lysyl-[protein] + 3 S-adenosyl-L-methionine = N(6),N(6),N(6)-trimethyl-L-lysyl-[protein] + 3 S-adenosyl-L-homocysteine + 3 H(+). Methylates ribosomal protein L11. This chain is Ribosomal protein L11 methyltransferase, found in Prochlorococcus marinus (strain MIT 9301).